A 431-amino-acid polypeptide reads, in one-letter code: tRNA(Ile)-lysidine synthase (431 aa).

20 to 25 (SGGLDS) serves as a coordination point for ATP.

This sequence belongs to the tRNA(Ile)-lysidine synthase family.

Its subcellular location is the cytoplasm. The enzyme catalyses cytidine(34) in tRNA(Ile2) + L-lysine + ATP = lysidine(34) in tRNA(Ile2) + AMP + diphosphate + H(+). Ligates lysine onto the cytidine present at position 34 of the AUA codon-specific tRNA(Ile) that contains the anticodon CAU, in an ATP-dependent manner. Cytidine is converted to lysidine, thus changing the amino acid specificity of the tRNA from methionine to isoleucine. The sequence is that of tRNA(Ile)-lysidine synthase from Escherichia coli O157:H7.